The following is a 235-amino-acid chain: Large ribosomal subunit protein uL1 (235 aa).

Belongs to the universal ribosomal protein uL1 family. As to quaternary structure, part of the 50S ribosomal subunit.

Binds directly to 23S rRNA. The L1 stalk is quite mobile in the ribosome, and is involved in E site tRNA release. Functionally, protein L1 is also a translational repressor protein, it controls the translation of the L11 operon by binding to its mRNA. This chain is Large ribosomal subunit protein uL1, found in Solidesulfovibrio magneticus (strain ATCC 700980 / DSM 13731 / RS-1) (Desulfovibrio magneticus).